Here is a 664-residue protein sequence, read N- to C-terminus: Two-component response regulator ARR2 (664 aa).

A disordered region spans residues 1 to 21 (MVNPGHGRGPDSGTAAGGSNS). The Response regulatory domain occupies 29–144 (RVLVVDDDPT…ALKNIWQHVV (116 aa)). Aspartate 80 is subject to 4-aspartylphosphate. The disordered stretch occupies residues 151 to 215 (WNVSEHSGGS…DDKEDSSSLK (65 aa)). Over residues 165-178 (GGDRDRQQQHREDA) the composition is skewed to basic and acidic residues. The segment covering 180–191 (NNSSSVNEGNGR) has biased composition (polar residues). Over residues 200–209 (EVDDQGDDKE) the composition is skewed to acidic residues. The short motif at 215–218 (KKPR) is the Nuclear localization signal element. Residues 218–268 (RVVWSVELHQQFVAAVNQLGVDKAVPKKILEMMNVPGLTRENVASHLQKYR) constitute a DNA-binding region (myb-like GARP). Residues 554–567 (AAFSTSEAYSSSST) are compositionally biased toward low complexity. Residues 554 to 589 (AAFSTSEAYSSSSTQRKRRETDATVVGEHGQNLQSP) are disordered.

This sequence belongs to the ARR family. Type-B subfamily. In terms of assembly, binds the target DNA as a monomer. Interacts with histidine-containing phosphotransfer proteins. Post-translationally, two-component system major event consists of a His-to-Asp phosphorelay between a sensor histidine kinase (HK) and a response regulator (RR). In plants, the His-to-Asp phosphorelay involves an additional intermediate named Histidine-containing phosphotransfer protein (HPt). This multistep phosphorelay consists of a His-Asp-His-Asp sequential transfer of a phosphate group between first a His and an Asp of the HK protein, followed by the transfer to a conserved His of the HPt protein and finally the transfer to an Asp in the receiver domain of the RR protein. Phosphorylated in response to cytokinin mediated by AHK3. In terms of tissue distribution, detected in the whole plant. Predominantly expressed in pollen.

The protein resides in the nucleus. In terms of biological role, transcriptional activator that binds specifically to the DNA sequence 5'-[AG]GATT-3'. Functions as a response regulator involved in His-to-Asp phosphorelay signal transduction system. Phosphorylation of the Asp residue in the receiver domain activates the ability of the protein to promote the transcription of target genes. Could directly activate some type-A response regulators in response to cytokinins. Involved in the expression of nuclear genes for components of mitochondrial complex I. Promotes cytokinin-mediated leaf longevity. Involved in the ethylene signaling pathway in an ETR1-dependent manner and in the cytokinin signaling pathway. This is Two-component response regulator ARR2 (ARR2) from Arabidopsis thaliana (Mouse-ear cress).